The primary structure comprises 670 residues: Probable Na(+)/H(+) antiporter nhx-3 (670 aa).

Helical transmembrane passes span 41–61 (VYVITTWLLVASLAKILFNLM), 73–93 (LLIIVGLGLGYFLNQTTLSGV), 97–117 (SHAFFLYLLPPIIFDAGYFMP), 129–149 (LVFSVLGTLWNTFAIGGSLLI), 164–184 (EILVFSALISAVDPVAVIAIF), 192–212 (FLFINVFGEALFNDGVTVVLY), 235–255 (GLSFFVVALGGAAIGIIFAIA), and 268–288 (ILAPVFIFLLPYMAYLTAEMV). N310 carries an N-linked (GlcNAc...) asparagine glycan. 4 helical membrane-spanning segments follow: residues 325–345 (MLAQCSETVIFMFLGLSTLTS), 351–371 (FIFIGATLVFCLIYRAIGIIV), 390–410 (FILSYGGLRGAIAYGLVVSIP), and 418–438 (MFITTTICVIYFTVFLQGITI). The disordered stretch occupies residues 648–670 (GDLKGHCGTSRKPKHSMFELRHV).

This sequence belongs to the monovalent cation:proton antiporter 1 (CPA1) transporter (TC 2.A.36) family. Post-translationally, phosphorylated. As to expression, expressed in hypodermal cells of the main body syncytium, ut1 cells of the vulva and the spermathecal junction cell.

The protein resides in the endomembrane system. Plays a role in epithelial membrane transport processes. This is Probable Na(+)/H(+) antiporter nhx-3 (nhx-3) from Caenorhabditis elegans.